The primary structure comprises 140 residues: uncharacterized protein (140 aa).

Helical transmembrane passes span Leu-33 to Phe-53 and Ser-59 to Phe-79. The span at Glu-89 to Asp-104 shows a compositional bias: basic and acidic residues. A disordered region spans residues Glu-89–Ser-140. The segment covering Phe-105–Ala-121 has biased composition (polar residues).

Its subcellular location is the membrane. This is an uncharacterized protein from Schizosaccharomyces pombe (strain 972 / ATCC 24843) (Fission yeast).